The sequence spans 204 residues: UPF0637 protein lmo1065 (204 aa).

The protein belongs to the UPF0637 family.

This Listeria monocytogenes serovar 1/2a (strain ATCC BAA-679 / EGD-e) protein is UPF0637 protein lmo1065.